The sequence spans 156 residues: Ribonuclease H (156 aa).

An RNase H type-1 domain is found at 1-142 (MGKQVEIFTD…CDELARAAAN (142 aa)). Residues D10, E48, D70, and D134 each contribute to the Mg(2+) site.

This sequence belongs to the RNase H family. Monomer. Requires Mg(2+) as cofactor.

It localises to the cytoplasm. The catalysed reaction is Endonucleolytic cleavage to 5'-phosphomonoester.. Its function is as follows. Endonuclease that specifically degrades the RNA of RNA-DNA hybrids. In Photorhabdus laumondii subsp. laumondii (strain DSM 15139 / CIP 105565 / TT01) (Photorhabdus luminescens subsp. laumondii), this protein is Ribonuclease H.